The sequence spans 99 residues: Cytochrome c-555 (99 aa).

Heme c is bound by residues C23, C26, H27, and M73.

Binds 1 heme c group covalently per subunit.

This Prosthecochloris aestuarii protein is Cytochrome c-555.